We begin with the raw amino-acid sequence, 362 residues long: Peptide chain release factor 1 (362 aa).

Q237 is subject to N5-methylglutamine. Positions 279-305 are disordered; the sequence is RLQQAEDEKRRSEEESSRRNLVASGDR. Positions 282–296 are enriched in basic and acidic residues; it reads QAEDEKRRSEEESSR.

The protein belongs to the prokaryotic/mitochondrial release factor family. Methylated by PrmC. Methylation increases the termination efficiency of RF1.

The protein localises to the cytoplasm. Peptide chain release factor 1 directs the termination of translation in response to the peptide chain termination codons UAG and UAA. In Colwellia psychrerythraea (strain 34H / ATCC BAA-681) (Vibrio psychroerythus), this protein is Peptide chain release factor 1.